Consider the following 318-residue polypeptide: Cis-3-alkyl-4-alkyloxetan-2-one decarboxylase (318 aa).

Positions 30-275 (PVVMVHGNPS…ADCGHYILED (246 aa)) constitute an AB hydrolase-1 domain.

This sequence belongs to the AB hydrolase superfamily.

The enzyme catalyses a cis-3-alkyl-4-alkyloxetan-2-one = a cis-alkene + CO2. Its function is as follows. Involved in olefin biosynthesis. Catalyzes the elimination of carbon dioxide from beta-lactones to form the final olefin product. The S.oneidensis oleABCD genes produce 3,6,9,12,15,19,22,25,28-hentriacontanonaene, which may aid the cells in adapting to a sudden drop in temperature. The protein is Cis-3-alkyl-4-alkyloxetan-2-one decarboxylase of Shewanella oneidensis (strain ATCC 700550 / JCM 31522 / CIP 106686 / LMG 19005 / NCIMB 14063 / MR-1).